We begin with the raw amino-acid sequence, 472 residues long: Arabinose-proton symporter (472 aa).

Topologically, residues 1-29 are cytoplasmic; the sequence is MVTINTESALTPRSLRDTRRMNMFVSVAA. Residues 30–50 traverse the membrane as a helical segment; that stretch reads AVAGLLFGLDIGVIAGALPFI. Residues 51–63 lie on the Periplasmic side of the membrane; that stretch reads TDHFVLTSRLQEW. Residues 64-84 form a helical membrane-spanning segment; it reads VVSSMMLGAAIGALFNGWLSF. The Cytoplasmic portion of the chain corresponds to 85–91; sequence RLGRKYS. Residues 92–112 form a helical membrane-spanning segment; the sequence is LMAGAILFVLGSIGSAFATSV. At 113 to 114 the chain is on the periplasmic side; it reads EM. The helical transmembrane segment at 115 to 135 threads the bilayer; the sequence is LIAARVVLGIAVGIASYTAPL. The Cytoplasmic portion of the chain corresponds to 136 to 154; that stretch reads YLSEMASENVRGKMISMYQ. A helical transmembrane segment spans residues 155-175; it reads LMVTLGIVLAFLSDTAFSYSG. Residues 176-178 are Periplasmic-facing; the sequence is NWR. The chain crosses the membrane as a helical span at residues 179–199; that stretch reads AMLGVLALPAVLLIILVVFLP. The Cytoplasmic segment spans residues 200-257; it reads NSPRWLAEKGRHIEAEEVLRMLRDTSEKAREELNEIRESLKLKQGGWALFKINRNVRR. The chain crosses the membrane as a helical span at residues 258–278; the sequence is AVFLGMLLQAMQQFTGMNIIM. The Periplasmic segment spans residues 279–297; the sequence is YYAPRIFKMAGFTTTEQQM. Residues 298-318 form a helical membrane-spanning segment; that stretch reads IATLVVGLTFMFATFIAVFTV. Residues 319–325 are Cytoplasmic-facing; that stretch reads DKAGRKP. The chain crosses the membrane as a helical span at residues 326-346; the sequence is ALKIGFSVMALGTLVLGYCLM. Over 347–361 the chain is Periplasmic; that stretch reads QFDNGTASSGLSWLS. The chain crosses the membrane as a helical span at residues 362 to 382; sequence VGMTMMCIAGYAMSAAPVVWI. Residues 383 to 404 lie on the Cytoplasmic side of the membrane; sequence LCSEIQPLKCRDFGITCSTTTN. Helical transmembrane passes span 405–425 and 426–446; these read WVSN…IGAA and GTFW…FWLI. Residues 447–472 are Cytoplasmic-facing; the sequence is PETKNVTLEHIERKLMAGEKLRNIGV.

Belongs to the major facilitator superfamily. Sugar transporter (TC 2.A.1.1) family.

The protein localises to the cell inner membrane. It catalyses the reaction L-arabinose(in) + H(+)(in) = L-arabinose(out) + H(+)(out). Uptake of L-arabinose across the cytoplasmic membrane with the concomitant transport of protons into the cell (symport system). The sequence is that of Arabinose-proton symporter (araE) from Escherichia coli O157:H7.